The primary structure comprises 545 residues: ATP synthase subunit alpha (545 aa).

Residue 173 to 180 (GDRQTGKT) participates in ATP binding.

Belongs to the ATPase alpha/beta chains family. In terms of assembly, F-type ATPases have 2 components, CF(1) - the catalytic core - and CF(0) - the membrane proton channel. CF(1) has five subunits: alpha(3), beta(3), gamma(1), delta(1), epsilon(1). CF(0) has three main subunits: a(1), b(2) and c(9-12). The alpha and beta chains form an alternating ring which encloses part of the gamma chain. CF(1) is attached to CF(0) by a central stalk formed by the gamma and epsilon chains, while a peripheral stalk is formed by the delta and b chains.

It is found in the cell membrane. It catalyses the reaction ATP + H2O + 4 H(+)(in) = ADP + phosphate + 5 H(+)(out). Functionally, produces ATP from ADP in the presence of a proton gradient across the membrane. The alpha chain is a regulatory subunit. The polypeptide is ATP synthase subunit alpha (Clavibacter michiganensis subsp. michiganensis (strain NCPPB 382)).